The following is a 76-amino-acid chain: Defensin-like protein 163 (76 aa).

The signal sequence occupies residues 1–27 (MAKLIYSYLFISMFVLSVLLALPNAEG). 4 disulfide bridges follow: cysteine 33–cysteine 76, cysteine 43–cysteine 62, cysteine 48–cysteine 70, and cysteine 52–cysteine 72.

The protein belongs to the DEFL family.

It localises to the secreted. This chain is Defensin-like protein 163 (LCR24), found in Arabidopsis thaliana (Mouse-ear cress).